The chain runs to 339 residues: MDPVQSHGSQSSLPPPFHARDFQLHLQQQQQHQQQHQQQQQQQFFLHHHQQPQRNLDQDHEQQGGSILNRSIKMDREETSDNMDNIANTNSGSEGKEMSLHGGEGGSGGGGSGEQMTRRPRGRPAGSKNKPKAPIIITRDSANALRTHVMEIGDGCDIVDCMATFARRRQRGVCVMSGTGSVTNVTIRQPGSPPGSVVSLHGRFEILSLSGSFLPPPAPPAATGLSVYLAGGQGQVVGGSVVGPLLCSGPVVVMAASFSNAAYERLPLEEDEMQTPVQGGGGGGGGGGGMGSPPMMGQQQAMAAMAAAQGLPPNLLGSVQLPPPQQNDQQYWSTGRPPY.

Residues 1 to 12 are compositionally biased toward polar residues; that stretch reads MDPVQSHGSQSS. Disordered regions lie at residues 1 to 132 and 273 to 339; these read MDPV…NKPK and MQTP…RPPY. Residues 24–45 are compositionally biased toward low complexity; it reads LHLQQQQQHQQQHQQQQQQQFF. Over residues 82 to 93 the composition is skewed to polar residues; sequence NMDNIANTNSGS. Over residues 102–113 the composition is skewed to gly residues; the sequence is GGEGGSGGGGSG. Residues 118 to 130 constitute a DNA-binding region (a.T hook); that stretch reads RRPRGRPAGSKNK. One can recognise a PPC domain in the interval 142–279; it reads ANALRTHVME…EDEMQTPVQG (138 aa). The segment covering 278–291 has biased composition (gly residues); sequence QGGGGGGGGGGGMG. Residues 292 to 310 are compositionally biased toward low complexity; that stretch reads SPPMMGQQQAMAAMAAAQG.

The protein resides in the nucleus. Transcription factor that specifically binds AT-rich DNA sequences related to the nuclear matrix attachment regions (MARs). The chain is AT-hook motif nuclear-localized protein 26 from Arabidopsis thaliana (Mouse-ear cress).